Consider the following 659-residue polypeptide: Exoribonuclease 2 (659 aa).

In terms of domain architecture, RNB spans 189-531 (RKDLTALHFV…NHRLIKACIA (343 aa)). An S1 motif domain is found at 576–658 (KPEFQAEVQD…ETRSLIGNLV (83 aa)).

Belongs to the RNR ribonuclease family. RNase II subfamily.

Its subcellular location is the cytoplasm. It catalyses the reaction Exonucleolytic cleavage in the 3'- to 5'-direction to yield nucleoside 5'-phosphates.. In terms of biological role, involved in mRNA degradation. Hydrolyzes single-stranded polyribonucleotides processively in the 3' to 5' direction. This Actinobacillus succinogenes (strain ATCC 55618 / DSM 22257 / CCUG 43843 / 130Z) protein is Exoribonuclease 2.